A 119-amino-acid polypeptide reads, in one-letter code: Putative membrane protein insertion efficiency factor (119 aa).

This sequence belongs to the UPF0161 family.

Its subcellular location is the cell inner membrane. Could be involved in insertion of integral membrane proteins into the membrane. The polypeptide is Putative membrane protein insertion efficiency factor (Agrobacterium fabrum (strain C58 / ATCC 33970) (Agrobacterium tumefaciens (strain C58))).